A 1133-amino-acid polypeptide reads, in one-letter code: Myb-binding protein 1A (1133 aa).

Disordered stretches follow at residues 1-62, 718-764, 924-943, and 1111-1133; these read MKSK…ENTA, PLSK…DAES, GEEHSEEDQENGKQPASRQA, and KKVAKQKKQAAAKPMVVEDEEST. 2 stretches are compositionally biased toward basic and acidic residues: residues 20–35 and 50–60; these read KAKEDRKRAKTQKSEA and EKPAETEEKEN. Acidic residues-rich tracts occupy residues 725-735 and 744-762; these read GEEESDDELDK and DDSEDEDEDEEEDEGEDDA.

It belongs to the MYBBP1A family. In terms of assembly, interacts with nclb.

It is found in the cytoplasm. The protein localises to the nucleus. It localises to the nucleolus. Its function is as follows. Has a role in rRNA biogenesis, cell proliferation and tissue growth by contributing to the localization of nclb to the nucleolus. The protein is Myb-binding protein 1A of Drosophila melanogaster (Fruit fly).